A 972-amino-acid chain; its full sequence is Structural polyprotein (972 aa).

Residue D26 coordinates a divalent metal cation. One can recognise a Peptidase S50 domain in the interval 509–734 (SGSEAGSYSK…YLGQLMRTTA (226 aa)). Residue S633 is the Nucleophile of the active site. K674 is a catalytic residue. Disordered regions lie at residues 797–817 (STPP…AQEA) and 917–972 (GGRG…DGEV). Over residues 801 to 817 (KHQEKPKGPDQHTAQEA) the composition is skewed to basic and acidic residues.

As to quaternary structure, homotrimer. A central divalent metal (possibly cobalt) stabilizes the VP2 trimer. Homodimer. interacts (via C-terminus) with VP1 in the cytoplasm. Interacts with VP2. In terms of processing, specific enzymatic cleavages yield mature proteins. Capsid assembly seems to be regulated by polyprotein processing. The protease VP4 cleaves itself off the polyprotein, thus releasing pre-VP2 and VP3 within the infected cell. During capsid assembly, the C-terminus of pre-VP2 is further processed by VP4, giving rise to VP2, the external capsid protein and three small peptides that all stay closely associated with the capsid.

It localises to the virion. The protein resides in the host cytoplasm. Capsid protein VP2 self assembles to form an icosahedral capsid with a T=13 symmetry, about 70 nm in diameter, and consisting of 260 VP2 trimers. The capsid encapsulates the genomic dsRNA. VP2 is also involved in attachment and entry into the host cell. In terms of biological role, the precursor of VP2 plays an important role in capsid assembly. First, pre-VP2 and VP2 oligomers assemble to form a procapsid. Then, the pre-VP2 intermediates may be processed into VP2 proteins by proteolytic cleavage mediated by VP4 to obtain the mature virion. The final capsid is composed of pentamers and hexamers but VP2 has a natural tendency to assemble into all-pentameric structures. Therefore pre-VP2 may be required to allow formation of the hexameric structures. Its function is as follows. Protease VP4 is a serine protease that cleaves the polyprotein into its final products. Pre-VP2 is first partially cleaved, and may be completely processed by VP4 upon capsid maturation. Functionally, capsid protein VP3 plays a key role in virion assembly by providing a scaffold for the capsid composed of VP2. May self-assemble to form a T=4-like icosahedral inner-capsid composed of at least 180 trimers. Plays a role in genomic RNA packaging by recruiting VP1 into the capsid and interacting with the dsRNA genome segments to form a ribonucleoprotein complex. Additionally, the interaction of the VP3 C-terminal tail with VP1 removes the inherent structural blockade of the polymerase active site. Thus, VP3 can also function as a transcriptional activator. Structural peptide 1 is a small peptide derived from the C-terminus of pre-VP2. It destabilizes and perforates cell membranes, suggesting a role during viral entry. In terms of biological role, structural peptide 2 is a small peptide derived from the C-terminus of pre-VP2. It is not essential for virus viability, but viral growth is affected when this protein is absent. Its function is as follows. Structural peptide 3 is a small peptide derived from pre-VP2 C-terminus. It is not essential for virus viability, but viral growth is affected when this protein is absent. This is Structural polyprotein from Oncorhynchus mykiss (Rainbow trout).